Reading from the N-terminus, the 452-residue chain is UDP-N-acetylmuramoyl-tripeptide--D-alanyl-D-alanine ligase (452 aa).

Residue 107–113 (GSSGKTS) coordinates ATP.

Belongs to the MurCDEF family. MurF subfamily. In terms of assembly, monomer.

It localises to the cytoplasm. The catalysed reaction is D-alanyl-D-alanine + UDP-N-acetyl-alpha-D-muramoyl-L-alanyl-gamma-D-glutamyl-meso-2,6-diaminopimelate + ATP = UDP-N-acetyl-alpha-D-muramoyl-L-alanyl-gamma-D-glutamyl-meso-2,6-diaminopimeloyl-D-alanyl-D-alanine + ADP + phosphate + H(+). The protein operates within cell wall biogenesis; peptidoglycan biosynthesis. Functionally, involved in cell wall formation. Catalyzes the final step in the synthesis of UDP-N-acetylmuramoyl-pentapeptide, the precursor of murein. The polypeptide is UDP-N-acetylmuramoyl-tripeptide--D-alanyl-D-alanine ligase (Escherichia coli (strain K12)).